The following is a 516-amino-acid chain: HMG box-containing protein 1 (516 aa).

The tract at residues 150–182 is disordered; that stretch reads ARPPPVSSSSKSGPAFPHDHWKEETPVRHERAN. Low complexity predominate over residues 156–165; it reads SSSSKSGPAF. Over residues 166-182 the composition is skewed to basic and acidic residues; sequence PHDHWKEETPVRHERAN. An AXH domain is found at 203-345; the sequence is WCNSWPSTIW…PPGHPDAINF (143 aa). The HMG box DNA-binding region spans 436–504; the sequence is CKRPMNAFML…EQKRLNPDCW (69 aa).

Binds TCF4. Binds RB1. Binds the second PAH repeat of SIN3A. In terms of processing, ubiquitinated by the CTLH E3 ubiquitin-protein ligase complex, leading to subsequent proteasomal degradation.

The protein resides in the nucleus. Its function is as follows. Transcriptional repressor that binds to the promoter region of target genes. Plays a role in the regulation of the cell cycle and of the Wnt pathway. Binds preferentially to the sequence 5'-TTCATTCATTCA-3'. Binding to the histone H1.0 promoter is enhanced by interaction with RB1. Disrupts the interaction between DNA and TCF4. The protein is HMG box-containing protein 1 (Hbp1) of Mus musculus (Mouse).